Consider the following 718-residue polypeptide: Adhesin-like cell surface protein MAD1 (718 aa).

An N-terminal signal peptide occupies residues 1–19 (MKGAIQFLGALAAVQAVSA). Tandem repeats lie at residues 217-243 (PCTEYSCTATDTTTEPAPTEPAPTEPA), 244-265 (PCTEYSCTATDTTTEPAPTEPA), 266-282 (PCTEYSCTATDTTTEPA), 283-309 (PCTEYSCTATDTTTEPAPTEPAPTEPA), 310-336 (PCTEYSCTATDTTTEPAPTEPAPTEPA), 337-358 (PCTEYSCTATDTTTEPAPTEPA), 359-382 (PCTEYSCTATETTSEAVPTTTDEA), 383-402 (PCTDYSCTATEAVPTTTDEA), and 403-420 (PCTEYSCTGVPTSEAVPT). Residues 452–472 (TSIPYETPSPSETETLPPSGT) are disordered. The CFEM domain occupies 462–575 (SETETLPPSG…VTLPPVTTGA (114 aa)). 3 disulfides stabilise this stretch: Cys-494-Cys-526, Cys-504-Cys-512, and Cys-514-Cys-548. Asp-509 contributes to the heme binding site. Gly-693 carries GPI-anchor amidated glycine lipidation. The propeptide at 694 to 718 (AASSFKAFSTVMLAGVIGLTALIMA) is removed in mature form.

It belongs to the RBT5 family. Post-translationally, the GPI-anchor is attached to the protein in the endoplasmic reticulum and serves to target the protein to the cell surface. There, the glucosamine-inositol phospholipid moiety is cleaved off and the GPI-modified mannoprotein is covalently attached via its lipidless GPI glycan remnant to the 1,6-beta-glucan of the outer cell wall layer.

The protein localises to the secreted. It localises to the cell wall. The protein resides in the cell membrane. In terms of biological role, cell surface adhesion protein that plays a key role in switching between the saprophytic lifestyle and the predacious lifestyle (nematode trapping). Likely functions to prevent energy-consuming trap formation in the absence of nematodes, and keeps the fungus in the saprophytic life style. May influence the induction signal of trap formation by limiting the porosity of the cell wall and thus affecting its permeability of nitrogen source. The chain is Adhesin-like cell surface protein MAD1 from Arthrobotrys oligospora (strain ATCC 24927 / CBS 115.81 / DSM 1491) (Nematode-trapping fungus).